Reading from the N-terminus, the 446-residue chain is MMITLRKLPLAVAVAAGVMSAQAMAVDFHGYARSGIGWTGSGGEQQCFQTTGAQSKYRLGNECETYAELKLGQEVWKEGDKSFYFDTNVAYSVAQQNDWEATDPAFREANVQGKNLIEWLPGSTIWAGKRFYQRHDVHMIDFYYWDISGPGAGLENIDVGFGKLSLAATRSSEAGGSSSFASNNIYDYTNETANDVFDVRLAQMEINPGGTLELGVDYGRANLRDNYRLVDGASKDGWLFTAEHTQSVLKGFNKFVVQYATDSMTSQGKGLSQGSGVAFDNEKFAYNINNNGHMLRILDHGAISMGDNWDMMYVGMYQDINWDNDNGTKWWTVGIRPMYKWTPIMSTVMEIGYDNVESQRTGDKNNQYKITLAQQWQAGDSIWSRPAIRVFATYAKWDEKWGYDYNGDSKVNPNYGKAVPADFNGGSFGRGDSDEWTFGAQMEIWW.

The signal sequence occupies residues 1–25 (MMITLRKLPLAVAVAAGVMSAQAMA).

The protein belongs to the porin LamB (TC 1.B.3) family. In terms of assembly, homotrimer formed of three 18-stranded antiparallel beta-barrels, containing three independent channels.

It is found in the cell outer membrane. The enzyme catalyses beta-maltose(in) = beta-maltose(out). Involved in the transport of maltose and maltodextrins. This is Maltoporin from Escherichia coli O8 (strain IAI1).